The chain runs to 331 residues: Cytosolic arginine sensor for mTORC1 subunit 1 (331 aa).

At serine 14 the chain carries Phosphoserine. In terms of domain architecture, ACT 1 spans 72–139; that stretch reads AEATWLVMNV…SVVIHTLARE (68 aa). L-arginine is bound at residue 110–111; that stretch reads SV. The interval 155–174 is disordered; the sequence is GDDSSNGFPQAQHGPSPTVH. Positions 156–174 are enriched in polar residues; it reads DDSSNGFPQAQHGPSPTVH. An ACT 2 domain is found at 262-322; sequence WRMVRIGGQP…SCVIDILQRR (61 aa). Residues glycine 273, 279–280, and 299–303 each bind L-arginine; these read IV and TFNFD.

Belongs to the GATS family. Forms homodimers and heterodimers with CASTOR2. Interacts with the GATOR2 complex which is composed of MIOS, SEC13, SEH1L, WDR24 and WDR59; the interaction is negatively regulated by arginine. Interacts with TM4SF5; the interaction is positively regulated by leucine and is negatively regulated by arginine. In terms of processing, phosphorylation at Ser-14 by AKT1, promoting the interaction between CASTOR1 and RNF167. Post-translationally, ubiquitinated by RNF167 via 'Lys-29'-polyubiquitination, leading to its degradation, releasing the GATOR2 complex. Ubiquitination by RNF167 is promoted by phosphorylation at Ser-14 by AKT1.

Its subcellular location is the cytoplasm. It is found in the cytosol. Its function is as follows. Functions as an intracellular arginine sensor within the amino acid-sensing branch of the TORC1 signaling pathway. As a homodimer or a heterodimer with CASTOR2, binds and inhibits the GATOR subcomplex GATOR2 and thereby mTORC1. Binding of arginine to CASTOR1 allosterically disrupts the interaction of CASTOR1-containing dimers with GATOR2 which can in turn activate mTORC1 and the TORC1 signaling pathway. In Rattus norvegicus (Rat), this protein is Cytosolic arginine sensor for mTORC1 subunit 1.